Consider the following 472-residue polypeptide: Argininosuccinate lyase (472 aa).

Belongs to the lyase 1 family. Argininosuccinate lyase subfamily.

The protein resides in the cytoplasm. It carries out the reaction 2-(N(omega)-L-arginino)succinate = fumarate + L-arginine. It functions in the pathway amino-acid biosynthesis; L-arginine biosynthesis; L-arginine from L-ornithine and carbamoyl phosphate: step 3/3. The chain is Argininosuccinate lyase from Syntrophus aciditrophicus (strain SB).